Here is a 686-residue protein sequence, read N- to C-terminus: Probable serine/threonine-protein kinase pdkA (686 aa).

The disordered stretch occupies residues 1 to 31; sequence MENIVITNTSGGGGGGVPSSSTDPPNNTTTT. Residues 18 to 31 show a composition bias toward low complexity; the sequence is PSSSTDPPNNTTTT. The Protein kinase domain maps to 69 to 449; it reads FIIGKVLGEG…FDNLKAHPFF (381 aa). ATP contacts are provided by residues 79–81 and Lys-98; that span reads SYG. The PIF-pocket stretch occupies residues 100 to 144; the sequence is LEKKQIIKENKIKYVQIEKEIFCKSNHPNIVKLFFTFRSEQCLYY. Residues 147 to 149 and Asp-153 contribute to the ATP site; that span reads ELC. The Proton acceptor role is filled by Asp-192. 2 residues coordinate ATP: Glu-196 and Asp-210. Disordered stretches follow at residues 211 to 321 and 481 to 584; these read FGTG…NTNT and LFSP…NNIS. Positions 222 to 257 are enriched in low complexity; sequence SSQQQQQQQQQQQQLPTNSSGNLSSLLNNVNNLSVS. The segment covering 258-267 has biased composition (polar residues); the sequence is TDLTQQQQNR. Low complexity-rich tracts occupy residues 268–279, 288–321, and 503–568; these read TSSVDSASTTDS, TTTT…NTNT, and NSCN…QRSG. The 90-residue stretch at 593–682 folds into the PH domain; the sequence is VIYQGLVWKR…DSIKSVILSS (90 aa).

Belongs to the protein kinase superfamily. AGC Ser/Thr protein kinase family. PDPK1 subfamily.

It carries out the reaction L-seryl-[protein] + ATP = O-phospho-L-seryl-[protein] + ADP + H(+). The catalysed reaction is L-threonyl-[protein] + ATP = O-phospho-L-threonyl-[protein] + ADP + H(+). The chain is Probable serine/threonine-protein kinase pdkA (pdkA) from Dictyostelium discoideum (Social amoeba).